An 86-amino-acid chain; its full sequence is Small ribosomal subunit protein uS15 (86 aa).

The disordered stretch occupies residues 1–22 (MSVDTQKVIEDNKRSAQDTGSP). Residues 7-16 (KVIEDNKRSA) show a composition bias toward basic and acidic residues.

Belongs to the universal ribosomal protein uS15 family. Part of the 30S ribosomal subunit. Forms a bridge to the 50S subunit in the 70S ribosome, contacting the 23S rRNA.

One of the primary rRNA binding proteins, it binds directly to 16S rRNA where it helps nucleate assembly of the platform of the 30S subunit by binding and bridging several RNA helices of the 16S rRNA. In terms of biological role, forms an intersubunit bridge (bridge B4) with the 23S rRNA of the 50S subunit in the ribosome. The protein is Small ribosomal subunit protein uS15 of Xanthomonas axonopodis pv. citri (strain 306).